Reading from the N-terminus, the 385-residue chain is Probable thioesterase PNKD (385 aa).

Residues 32–42 show a composition bias toward polar residues; the sequence is KASQNRTRALQ. The interval 32–56 is disordered; sequence KASQNRTRALQSHSSPECKEEPEPL. Residue Val121 is modified to Phosphoserine. Positions 172, 174, 176, 177, 229, 253, and 291 each coordinate Zn(2+).

Belongs to the metallo-beta-lactamase superfamily. Glyoxalase II family. Isoform 2 interacts with the sarcomeric proteins, MRLC2, MYOM1 and ENO3. Zn(2+) is required as a cofactor. Undergoes cleavage at the N-terminus. In terms of tissue distribution, expressed in many discrete areas of the brain.

It localises to the cell membrane. Its subcellular location is the mitochondrion. The protein localises to the cytoplasm. It catalyses the reaction a thioester + H2O = a thiol + a carboxylate + H(+). Probable thioesterase that may play a role in cellular detoxification processes; it likely acts on a yet-unknown alpha-hydroxythioester substrate. In vitro, it is able to catalyze the hydrolysis of S-D-lactoyl-glutathione to form glutathione and D-lactic acid at very low rate, though this reaction is not physiologically relevant in vivo. In Mus musculus (Mouse), this protein is Probable thioesterase PNKD (Pnkd).